The primary structure comprises 1099 residues: Solute carrier family 12 member 1 (1099 aa).

The Cytoplasmic segment spans residues methionine 1–phenylalanine 177. The RFXV motif signature appears at arginine 20–valine 23. The tract at residues glutamate 31–glutamate 53 is disordered. A Phosphoserine modification is found at serine 61. Serine 91 carries the post-translational modification Phosphoserine; by OXSR1 and STK39. Threonine 95 is subject to Phosphothreonine. 2 positions are modified to phosphothreonine; by OXSR1 and STK39: threonine 100 and threonine 105. Threonine 118 is subject to Phosphothreonine. A Phosphoserine modification is found at serine 120. At serine 130 the chain carries Phosphoserine; by AMPK. Serine 148 carries the phosphoserine modification. The chain crosses the membrane as a helical span at residues glycine 178 to isoleucine 198. Residues arginine 199–serine 201 lie on the Extracellular side of the membrane. Residues tryptophan 202–valine 222 traverse the membrane as a helical segment. Residues threonine 223–serine 259 lie on the Cytoplasmic side of the membrane. Residues isoleucine 260–alanine 280 form a helical membrane-spanning segment. The Extracellular portion of the chain corresponds to glutamate 281–arginine 302. A helical transmembrane segment spans residues isoleucine 303–glutamate 323. The Cytoplasmic portion of the chain corresponds to alanine 324–glutamine 327. The helical transmembrane segment at valine 328 to proline 348 threads the bilayer. Topologically, residues serine 349 to glycine 379 are extracellular. A helical transmembrane segment spans residues phenylalanine 380–isoleucine 400. The Cytoplasmic portion of the chain corresponds to serine 401 to leucine 417. The helical transmembrane segment at alanine 418–valine 438 threads the bilayer. The Extracellular portion of the chain corresponds to arginine 439 to leucine 550. N-linked (GlcNAc...) asparagine glycosylation is found at asparagine 446 and asparagine 456. The next 2 membrane-spanning stretches (helical) occupy residues threonine 551 to isoleucine 571 and serine 572 to alanine 592. Residues lysine 593–serine 609 are Extracellular-facing. A helical membrane pass occupies residues leucine 610 to isoleucine 630. The Cytoplasmic segment spans residues threonine 631–serine 1099.

This sequence belongs to the SLC12A transporter family. In terms of assembly, when phosphorylated, interacts with PPP3CB. Post-translationally, phosphorylated at Ser-91, Thr-100 and Thr-105 by OXSR1/OSR1 and STK39/SPAK downstream of WNK kinases (WNK1, WNK2, WNK3 or WNK4), promoting its activity. Kidney; localizes to the thick ascending limbs (at protein level).

The protein localises to the apical cell membrane. It catalyses the reaction K(+)(out) + 2 chloride(out) + Na(+)(out) = K(+)(in) + 2 chloride(in) + Na(+)(in). Its activity is regulated as follows. Activated following phosphorylation by OXSR1/OSR1 and STK39/SPAK downstream of WNK kinases (WNK1, WNK2, WNK3 or WNK4). Its function is as follows. Renal sodium, potassium and chloride ion cotransporter that mediates the transepithelial NaCl reabsorption in the thick ascending limb and plays an essential role in the urinary concentration and volume regulation. Electrically silent transporter system. This Homo sapiens (Human) protein is Solute carrier family 12 member 1 (SLC12A1).